Reading from the N-terminus, the 236-residue chain is Sorulation-regulated protein 2 (236 aa).

An N-terminal signal peptide occupies residues 1 to 20 (MLGLYLSSLFFAFFMAQVFA). Asn-155, Asn-160, Asn-203, and Asn-212 each carry an N-linked (GlcNAc...) asparagine glycan. Asn-212 carries GPI-anchor amidated asparagine lipidation. Positions 213–236 (SSSSLMPSMGILSFLFGLYLLLHP) are cleaved as a propeptide — removed in mature form.

In terms of processing, the GPI-anchor is attached to the protein in the endoplasmic reticulum and serves to target the protein to the cell surface. There, the glucosamine-inositol phospholipid moiety is cleaved off and the GPI-modified mannoprotein is covalently attached via its lipidless GPI glycan remnant to the 1,6-beta-glucan of the outer cell wall layer. N-glycosylated.

Its subcellular location is the spore wall. The protein localises to the secreted. It localises to the cell wall. It is found in the membrane. This Saccharomyces cerevisiae (strain ATCC 204508 / S288c) (Baker's yeast) protein is Sorulation-regulated protein 2.